Reading from the N-terminus, the 464-residue chain is Heterogeneous nuclear ribonucleoprotein K (464 aa).

M1 is subject to N-acetylmethionine. The segment at 1–37 is disordered; the sequence is METEQPEETFPNTETNGEFGKRPAEDMEEEQAFKRSR. The interval 1–276 is necessary for interaction with DDX1; the sequence is METEQPEETF…GRGGRPMPPS (276 aa). Residues 19 to 37 show a composition bias toward basic and acidic residues; it reads FGKRPAEDMEEEQAFKRSR. N6-acetyllysine; alternate is present on K34. K34 is covalently cross-linked (Glycyl lysine isopeptide (Lys-Gly) (interchain with G-Cter in SUMO1); alternate). Residue K34 forms a Glycyl lysine isopeptide (Lys-Gly) (interchain with G-Cter in SUMO2); alternate linkage. S36 is subject to Phosphoserine. T39 is subject to Phosphothreonine. Positions 42–104 constitute a KH 1 domain; sequence MVELRILLQS…ETIGEILKKI (63 aa). Glycyl lysine isopeptide (Lys-Gly) (interchain with G-Cter in SUMO2) cross-links involve residues K52 and K60. 2 tandem repeats follow at residues 54 to 76 and 59 to 62. The segment at 54–421 is 2 X 22 AA approximate repeats; the sequence is AGAVIGKGGK…QIRHESGASI (368 aa). The segment at 59–407 is 5 X 4 AA repeats of G-X-G-G; it reads GKGGKNIKAL…LAGSIIGKGG (349 aa). 2 positions are modified to phosphoserine: S75 and S116. Residues 144–209 enclose the KH 2 domain; that stretch reads DCELRLLIHQ…DRVVECIKII (66 aa). A Glycyl lysine isopeptide (Lys-Gly) (interchain with G-Cter in SUMO1); alternate cross-link involves residue K163. A Glycyl lysine isopeptide (Lys-Gly) (interchain with G-Cter in SUMO2); alternate cross-link involves residue K163. K198 is modified (N6-acetyllysine). The tract at residues 209-337 is interaction with ZIK1; sequence ILDLISESPI…RPGDRYDGMV (129 aa). 2 positions are modified to phosphoserine: S214 and S216. A Glycyl lysine isopeptide (Lys-Gly) (interchain with G-Cter in SUMO2); alternate cross-link involves residue K219. K219 is modified (N6-succinyllysine; alternate). The RNA-binding RGG-box stretch occupies residues 236–273; sequence YGGFTMMFDDRRGRPVGFPMRGRGGFDRMPPGRGGRPM. 3 consecutive repeat copies span residues 245–250, 257–260, and 267–270. The interval 245–329 is 2 X 6 AA approximate repeats; the sequence is DRRGRPVGFP…LMAYDRRGRP (85 aa). The tract at residues 250-329 is disordered; that stretch reads PVGFPMRGRG…LMAYDRRGRP (80 aa). The segment covering 252–266 has biased composition (low complexity); sequence GFPMRGRGGFDRMPP. A compositionally biased stretch (basic and acidic residues) spans 276–285; the sequence is SRRDYDDMSP. S284 bears the Phosphoserine mark. A 3-4 repeat occupies 295 to 298; sequence GRGG. At R316 the chain carries Omega-N-methylarginine. One copy of the 2-2 repeat lies at 324–329; that stretch reads DRRGRP. R377 carries the omega-N-methylarginine modification. A Phosphoserine modification is found at S379. Phosphotyrosine is present on Y380. A KH 3 domain is found at 387–451; that stretch reads IITTQVTIPK…DQIQNAQYLL (65 aa). 2 consecutive repeat copies span residues 399 to 421 and 404 to 407. Residue K405 is modified to N6-acetyllysine; alternate. Residue K405 forms a Glycyl lysine isopeptide (Lys-Gly) (interchain with G-Cter in SUMO2); alternate linkage. Residue S420 is modified to Phosphoserine. A Glycyl lysine isopeptide (Lys-Gly) (interchain with G-Cter in SUMO1); alternate cross-link involves residue K422. K422 participates in a covalent cross-link: Glycyl lysine isopeptide (Lys-Gly) (interchain with G-Cter in SUMO2); alternate. Residue K422 forms a Glycyl lysine isopeptide (Lys-Gly) (interchain with G-Cter in SUMO); alternate linkage.

In terms of assembly, identified in the spliceosome C complex. Interacts with ANKRD28, RBM42 and ZIK1. Interacts with DDX1. Interacts with MDM2; this interaction leads to ubiquitination and proteasomal degradation. Interacts with p53/TP53. Interacts with BRDT. Interacts with IVNS1ABP. Interacts with PPIA/CYPA. Part of a transcription inhibitory ribonucleoprotein complex composed at least of the circular RNA circZNF827, ZNF827 and HNRNPL. Post-translationally, sumoylated by CBX4. Sumoylation is increased upon DNA damage, such as that produced by doxorubicin, etoposide, UV light and camptothecin, due to enhanced CBX4 phosphorylation by HIPK2 under these conditions. In terms of processing, ubiquitinated by MDM2. Doxorubicin treatment does not affect monoubiquitination, but slightly decreases HNRNPK poly-ubiquitination. O-glycosylated (O-GlcNAcylated), in a cell cycle-dependent manner.

It is found in the cytoplasm. The protein resides in the nucleus. It localises to the nucleoplasm. The protein localises to the cell projection. Its subcellular location is the podosome. In terms of biological role, one of the major pre-mRNA-binding proteins. Binds tenaciously to poly(C) sequences. Likely to play a role in the nuclear metabolism of hnRNAs, particularly for pre-mRNAs that contain cytidine-rich sequences. Can also bind poly(C) single-stranded DNA. Plays an important role in p53/TP53 response to DNA damage, acting at the level of both transcription activation and repression. When sumoylated, acts as a transcriptional coactivator of p53/TP53, playing a role in p21/CDKN1A and 14-3-3 sigma/SFN induction. As far as transcription repression is concerned, acts by interacting with long intergenic RNA p21 (lincRNA-p21), a non-coding RNA induced by p53/TP53. This interaction is necessary for the induction of apoptosis, but not cell cycle arrest. As part of a ribonucleoprotein complex composed at least of ZNF827, HNRNPL and the circular RNA circZNF827 that nucleates the complex on chromatin, may negatively regulate the transcription of genes involved in neuronal differentiation. The chain is Heterogeneous nuclear ribonucleoprotein K (HNRNPK) from Bos taurus (Bovine).